Reading from the N-terminus, the 260-residue chain is Pyridoxine 5'-phosphate synthase (260 aa).

Residues Asn-7 and Arg-18 each contribute to the 3-amino-2-oxopropyl phosphate site. Catalysis depends on His-43, which acts as the Proton acceptor. 1-deoxy-D-xylulose 5-phosphate-binding residues include Arg-45 and His-50. Glu-83 acts as the Proton acceptor in catalysis. Thr-113 is a 1-deoxy-D-xylulose 5-phosphate binding site. His-208 serves as the catalytic Proton donor. 3-amino-2-oxopropyl phosphate is bound by residues Asp-209 and Gly-230–His-231.

This sequence belongs to the PNP synthase family. In terms of assembly, homooctamer; tetramer of dimers.

The protein localises to the cytoplasm. It carries out the reaction 3-amino-2-oxopropyl phosphate + 1-deoxy-D-xylulose 5-phosphate = pyridoxine 5'-phosphate + phosphate + 2 H2O + H(+). It participates in cofactor biosynthesis; pyridoxine 5'-phosphate biosynthesis; pyridoxine 5'-phosphate from D-erythrose 4-phosphate: step 5/5. Catalyzes the complicated ring closure reaction between the two acyclic compounds 1-deoxy-D-xylulose-5-phosphate (DXP) and 3-amino-2-oxopropyl phosphate (1-amino-acetone-3-phosphate or AAP) to form pyridoxine 5'-phosphate (PNP) and inorganic phosphate. The polypeptide is Pyridoxine 5'-phosphate synthase (Leptospira biflexa serovar Patoc (strain Patoc 1 / Ames)).